A 188-amino-acid polypeptide reads, in one-letter code: Dual specificity protein phosphatase 18 (188 aa).

Residues 19 to 160 enclose the Tyrosine-protein phosphatase domain; the sequence is GLSQITKSLF…LIHYELQLFG (142 aa). The interval 95 to 141 is sufficient for mitochondrial localization; the sequence is MQKGRTLLHCAAGVSRSAALCLAYLMKYHAMSLVDAHTWTKSCRPII. Cysteine 104 serves as the catalytic Phosphocysteine intermediate.

Belongs to the protein-tyrosine phosphatase family. Non-receptor class dual specificity subfamily.

It localises to the cytoplasm. Its subcellular location is the nucleus. The protein localises to the mitochondrion inner membrane. The enzyme catalyses O-phospho-L-tyrosyl-[protein] + H2O = L-tyrosyl-[protein] + phosphate. It carries out the reaction O-phospho-L-seryl-[protein] + H2O = L-seryl-[protein] + phosphate. The catalysed reaction is O-phospho-L-threonyl-[protein] + H2O = L-threonyl-[protein] + phosphate. In terms of biological role, can dephosphorylate single and diphosphorylated synthetic MAPK peptides, with preference for the phosphotyrosine and diphosphorylated forms over phosphothreonine. In vitro, dephosphorylates p-nitrophenyl phosphate (pNPP). The sequence is that of Dual specificity protein phosphatase 18 (Dusp18) from Mus musculus (Mouse).